Here is a 484-residue protein sequence, read N- to C-terminus: Cobyric acid synthase (484 aa).

A GATase cobBQ-type domain is found at 253 to 430; that stretch reads SLRVAVVRFP…WHGAFEHDEF (178 aa). C334 (nucleophile) is an active-site residue. Residue H422 is part of the active site.

It belongs to the CobB/CobQ family. CobQ subfamily.

The protein operates within cofactor biosynthesis; adenosylcobalamin biosynthesis. Catalyzes amidations at positions B, D, E, and G on adenosylcobyrinic A,C-diamide. NH(2) groups are provided by glutamine, and one molecule of ATP is hydrogenolyzed for each amidation. This Cutibacterium acnes (strain DSM 16379 / KPA171202) (Propionibacterium acnes) protein is Cobyric acid synthase.